Consider the following 855-residue polypeptide: DNA mismatch repair protein MutS (855 aa).

617-624 (GPNMGGKS) lines the ATP pocket.

This sequence belongs to the DNA mismatch repair MutS family.

Functionally, this protein is involved in the repair of mismatches in DNA. It is possible that it carries out the mismatch recognition step. This protein has a weak ATPase activity. The chain is DNA mismatch repair protein MutS from Baumannia cicadellinicola subsp. Homalodisca coagulata.